We begin with the raw amino-acid sequence, 165 residues long: Putative protein FAM86C2P (165 aa).

The protein belongs to the class I-like SAM-binding methyltransferase superfamily. EEF2KMT family.

The sequence is that of Putative protein FAM86C2P (FAM86C2P) from Homo sapiens (Human).